A 297-amino-acid chain; its full sequence is HTH-type transcriptional regulator ArgP (297 aa).

Residues 4 to 60 (PDYRTLQALDAVIRERGFERAAQKLCITQSAVSQRIKQLENMFGQPLLVRTVPPRPT) enclose the HTH lysR-type domain. Residues 21–40 (FERAAQKLCITQSAVSQRIK) constitute a DNA-binding region (H-T-H motif).

The protein belongs to the LysR transcriptional regulatory family. As to quaternary structure, homodimer.

In terms of biological role, controls the transcription of genes involved in arginine and lysine metabolism. This chain is HTH-type transcriptional regulator ArgP, found in Salmonella arizonae (strain ATCC BAA-731 / CDC346-86 / RSK2980).